A 287-amino-acid chain; its full sequence is Bifunctional protein FolD (287 aa).

NADP(+) is bound by residues 166–168 (GAS) and isoleucine 232.

It belongs to the tetrahydrofolate dehydrogenase/cyclohydrolase family. Homodimer.

It catalyses the reaction (6R)-5,10-methylene-5,6,7,8-tetrahydrofolate + NADP(+) = (6R)-5,10-methenyltetrahydrofolate + NADPH. It carries out the reaction (6R)-5,10-methenyltetrahydrofolate + H2O = (6R)-10-formyltetrahydrofolate + H(+). It functions in the pathway one-carbon metabolism; tetrahydrofolate interconversion. Catalyzes the oxidation of 5,10-methylenetetrahydrofolate to 5,10-methenyltetrahydrofolate and then the hydrolysis of 5,10-methenyltetrahydrofolate to 10-formyltetrahydrofolate. The chain is Bifunctional protein FolD from Aeromonas salmonicida (strain A449).